The chain runs to 2009 residues: Rootletin (2009 aa).

Coiled coils occupy residues 74–265 (EMAS…VTSD) and 346–438 (ASLH…LRLQ). Disordered stretches follow at residues 462–519 (ALSD…CSDS), 575–594 (RDQTAASAQAQEDAQREAQR), 636–665 (ELKRQHNQLEDAQEDSVQEGARARRELERS), 1180–1225 (EAQR…ELRS), and 1448–1501 (GRVS…EAVR). Positions 463–484 (LSDTESGVQLSSSERTADTSDG) are enriched in polar residues. 2 coiled-coil regions span residues 550 to 1058 (LGSV…LLAE) and 1091 to 1439 (LEME…GLRS). Positions 577 to 586 (QTAASAQAQE) are enriched in low complexity. A compositionally biased stretch (basic and acidic residues) spans 656–665 (ARARRELERS). A phosphoserine mark is found at S1453, S1463, and S1469. Y1475 carries the phosphotyrosine modification. Phosphoserine is present on residues S1476, S1479, S1483, S1489, and S1568. The span at 1479–1494 (SQPPSPGLIASPAPPD) shows a compositional bias: pro residues. Coiled-coil stretches lie at residues 1498-1697 (EAVR…GTLQ) and 1744-1998 (HLQK…RSSA). The segment at 1957–2009 (QVQTERTLEARERAHRQRVSGLEEQVSTLKAQLHQELRRSSASVSLPPGTPEK) is disordered.

It belongs to the rootletin family. In terms of assembly, homomer. Interacts with KLC3, NEK2 and the N-terminus of CEP250. Interacts with CEP44. Phosphorylated by NEK2 which may regulate its association with centrosomes. As to expression, highest expression detected in photoreceptor cells of retina. Expressed at lower levels in brain, trachea and kidney. Detected in all major ciliated epithelia. During embryonic development, enriched along the apical domains of neuroepithelium in brain ventricular zone, in primordia of retinal pigment epithelia and in neural retina.

The protein localises to the cytoplasm. The protein resides in the cytoskeleton. It localises to the microtubule organizing center. Its subcellular location is the centrosome. It is found in the centriole. The protein localises to the cilium basal body. In terms of biological role, major structural component of the ciliary rootlet, a cytoskeletal-like structure in ciliated cells which originates from the basal body at the proximal end of a cilium and extends proximally toward the cell nucleus. Furthermore, is required for the correct positioning of the cilium basal body relative to the cell nucleus, to allow for ciliogenesis. Contributes to centrosome cohesion before mitosis. This Mus musculus (Mouse) protein is Rootletin.